Here is a 466-residue protein sequence, read N- to C-terminus: Soluble pyridine nucleotide transhydrogenase (466 aa).

36-45 contacts FAD; the sequence is ERYQNVGGGC.

The protein belongs to the class-I pyridine nucleotide-disulfide oxidoreductase family. Homooligomer; probable homooctamer. FAD serves as cofactor.

It localises to the cytoplasm. It carries out the reaction NAD(+) + NADPH = NADH + NADP(+). Conversion of NADPH, generated by peripheral catabolic pathways, to NADH, which can enter the respiratory chain for energy generation. The chain is Soluble pyridine nucleotide transhydrogenase from Escherichia coli O157:H7.